The sequence spans 1007 residues: Serine/threonine-protein kinase PRP4 homolog (1007 aa).

Positions 1-104 are disordered; sequence MAATEPPSLR…PAKRTKLDDL (104 aa). The residue at position 2 (A2) is an N-acetylalanine. Residues S8, S21, S24, and S33 each carry the phosphoserine modification. Composition is skewed to basic residues over residues 40 to 60 and 68 to 82; these read KHSR…KHKH and KKHK…HKRK. A compositionally biased stretch (basic and acidic residues) spans 83-92; sequence EVLDASDKEG. 2 positions are modified to phosphoserine: S88 and S94. K100 is subject to N6-acetyllysine; alternate. K100 participates in a covalent cross-link: Glycyl lysine isopeptide (Lys-Gly) (interchain with G-Cter in SUMO2); alternate. K112 is covalently cross-linked (Glycyl lysine isopeptide (Lys-Gly) (interchain with G-Cter in SUMO2)). K118 is covalently cross-linked (Glycyl lysine isopeptide (Lys-Gly) (interchain with G-Cter in SUMO2); alternate). K118 is covalently cross-linked (Glycyl lysine isopeptide (Lys-Gly) (interchain with G-Cter in SUMO1); alternate). S132 carries the post-translational modification Phosphoserine. Y141 is modified (phosphotyrosine). Disordered regions lie at residues 141–535 and 560–583; these read YESG…EDEE and NISV…SPDD. S143, S145, and S167 each carry phosphoserine. Positions 158–169 are enriched in low complexity; the sequence is GNRSSTRSSSTR. Residues K171 and K178 each participate in a glycyl lysine isopeptide (Lys-Gly) (interchain with G-Cter in SUMO2) cross-link. Composition is skewed to basic residues over residues 180–203 and 215–231; these read SAKK…RKSK and RSKS…SKRS. Phosphoserine occurs at positions 240, 242, 258, 278, 292, and 294. Residues 248 to 271 show a composition bias toward basic and acidic residues; sequence RSQEKVGKARSPADEKIKSEEKGK. Positions 294-303 are enriched in basic and acidic residues; that stretch reads SPVDLRDKSK. Residues 304-315 show a composition bias toward basic residues; the sequence is DRRSRSKERKSK. Positions 316 to 325 are enriched in basic and acidic residues; sequence RSEIDKEKKP. S328, S354, S356, S366, and S368 each carry phosphoserine. Basic residues predominate over residues 342–367; sequence PSRRPGRSPKRRSLSPKQRDKSRRSR. Phosphothreonine is present on T385. Phosphoserine is present on S387. Composition is skewed to basic and acidic residues over residues 395-408 and 415-429; these read RSLE…ERRR and RPRD…RSKD. Phosphoserine occurs at positions 427, 431, and 437. Basic residues predominate over residues 438–497; sequence PSRRRSRSPIRRRSRSPLRRSRSPRRRSRSPRRRDRSRRSRSRLRRRSRSRGGHRRRSRS. A phosphoserine mark is found at S518, S519, S520, S565, S569, S576, S578, and S580. Residues 518–535 show a composition bias toward acidic residues; it reads SSSDDNLEDFDVEEEDEE. Low complexity predominate over residues 562-581; that stretch reads SVPSEPSSPQSSTRSRSPSP. Glycyl lysine isopeptide (Lys-Gly) (interchain with G-Cter in SUMO2) cross-links involve residues K593 and K659. Residues 687-1003 enclose the Protein kinase domain; it reads YNVYGYTGQG…INQALQHAFI (317 aa). ATP is bound by residues 693–701 and K717; that span reads TGQGVFSNV. An N6-acetyllysine modification is found at K717. The active-site Proton acceptor is D815. A Phosphotyrosine modification is found at Y849. A Phosphoserine modification is found at S852.

This sequence belongs to the protein kinase superfamily. CMGC Ser/Thr protein kinase family. Interacts with CLK1 C-terminus. Associates with the U5 snRNP and NCOR1 deacetylase complexes. Identified in the spliceosome C complex. Post-translationally, phosphorylated by CLK1. Autophosphorylated; phosphorylation inhibits interaction with its targets, such as PRPF6 or SMARCA4.

The protein localises to the nucleus. It is found in the chromosome. Its subcellular location is the centromere. It localises to the kinetochore. It catalyses the reaction L-seryl-[protein] + ATP = O-phospho-L-seryl-[protein] + ADP + H(+). The enzyme catalyses L-threonyl-[protein] + ATP = O-phospho-L-threonyl-[protein] + ADP + H(+). Its function is as follows. Serine/threonine kinase involved in spliceosomal assembly as well as mitosis and signaling regulation. Connects chromatin mediated regulation of transcription and pre-mRNA splicing. During spliceosomal assembly, interacts with and phosphorylates PRPF6 and PRPF31, components of the U4/U6-U5 tri-small nuclear ribonucleoprotein (snRNP), to facilitate the formation of the spliceosome B complex. Plays a role in regulating transcription and the spindle assembly checkpoint (SAC). Associates with U5 snRNP and NCOR1 deacetylase complexes which may allow a coordination of pre-mRNA splicing with chromatin remodeling events involved in transcriptional regulation. Associates and probably phosphorylates SMARCA4 and NCOR1. Phosphorylates SRSF1. Associates with kinetochores during mitosis and is necessary for recruitment and maintenance of the checkpoint proteins such as MAD1L1 and MAD12L1 at the kinetochores. Phosphorylates and regulates the activity of the transcription factors such as ELK1 and KLF13. Phosphorylates nuclear YAP1 and WWTR1/TAZ which induces nuclear exclusion and regulates Hippo signaling pathway, involved in tissue growth control. This Rattus norvegicus (Rat) protein is Serine/threonine-protein kinase PRP4 homolog (Prp4k).